The sequence spans 444 residues: Type VI secretion system baseplate component TssK1 (444 aa).

As to quaternary structure, forms transient higher-order structures that correlated with dynamics of sheath component TssB1. Interacts with TssA1.

Core component of the H1 type VI (H1-T6SS) secretion system that plays a role in the release of toxins targeting both eukaryotic and prokaryotic species. Functions as a spatio-temporal marker for assembly of contractile apparatus made of TssB1 and TssC1. This role in assembly depends on TssM1. This is Type VI secretion system baseplate component TssK1 from Pseudomonas aeruginosa (strain ATCC 15692 / DSM 22644 / CIP 104116 / JCM 14847 / LMG 12228 / 1C / PRS 101 / PAO1).